The following is a 422-amino-acid chain: UDP-N-acetylglucosamine 1-carboxyvinyltransferase (422 aa).

23-24 lines the phosphoenolpyruvate pocket; sequence KN. UDP-N-acetyl-alpha-D-glucosamine is bound at residue R92. The Proton donor role is filled by C116. At C116 the chain carries 2-(S-cysteinyl)pyruvic acid O-phosphothioketal. UDP-N-acetyl-alpha-D-glucosamine-binding positions include 121-125, 161-164, D306, and I328; these read RPVDL and KVSV.

This sequence belongs to the EPSP synthase family. MurA subfamily.

The protein localises to the cytoplasm. The catalysed reaction is phosphoenolpyruvate + UDP-N-acetyl-alpha-D-glucosamine = UDP-N-acetyl-3-O-(1-carboxyvinyl)-alpha-D-glucosamine + phosphate. Its pathway is cell wall biogenesis; peptidoglycan biosynthesis. In terms of biological role, cell wall formation. Adds enolpyruvyl to UDP-N-acetylglucosamine. The chain is UDP-N-acetylglucosamine 1-carboxyvinyltransferase from Aliivibrio fischeri (strain ATCC 700601 / ES114) (Vibrio fischeri).